A 249-amino-acid chain; its full sequence is Metallo-beta-lactamase type 2 (249 aa).

An N-terminal signal peptide occupies residues 1 to 22 (MLKKIKISLILALGLTSLQAFG). Zn(2+) contacts are provided by His-98, His-100, Asp-102, His-161, and Cys-180. Lys-183 contributes to the substrate binding site. A Zn(2+)-binding site is contributed by His-222.

It belongs to the metallo-beta-lactamase superfamily. Class-B beta-lactamase family. In terms of assembly, monomer. Zn(2+) is required as a cofactor.

The protein localises to the periplasm. It catalyses the reaction a beta-lactam + H2O = a substituted beta-amino acid. Inhibited by chelating agents such as EDTA, 1-10 phenanthroline and pyridine-2,6-dicarboxylic acid. Its function is as follows. Confers resistance to the different beta-lactams antibiotics (penicillin, cephalosporin and carbapenem) via the hydrolysis of the beta-lactam ring. The chain is Metallo-beta-lactamase type 2 (blaB1) from Elizabethkingia meningoseptica (Chryseobacterium meningosepticum).